The sequence spans 690 residues: Protein MODIFIED TRANSPORT TO THE VACUOLE 1 (690 aa).

The VHS domain occupies 20 to 150; sequence VTSDEDKVAP…PESINRRIEG (131 aa). Disordered regions lie at residues 228–258 and 518–551; these read DGNYGTSKNTTGGSWGHASGEASESSASVRV and FSIDENNSNQKGSSSSTLPQDLFAMPSTTSHQAP. The segment covering 243 to 257 has biased composition (low complexity); the sequence is GHASGEASESSASVR. A compositionally biased stretch (polar residues) spans 520–536; it reads IDENNSNQKGSSSSTLP.

In terms of assembly, binds to clathrin heavy chain. Expressed in inflorescence stems, stigmas, roots, roots meristems, embryos, and floral and leaf vasculatures, but absent from the floral abscission zone.

It is found in the golgi apparatus. Its subcellular location is the trans-Golgi network. The protein resides in the cytoplasmic vesicle. The protein localises to the clathrin-coated vesicle. Mediates clathrin-dependent trafficking of vacuolar cargo from the trans-Golgi network (TGN). Promotes plant growth. The polypeptide is Protein MODIFIED TRANSPORT TO THE VACUOLE 1 (Arabidopsis thaliana (Mouse-ear cress)).